The sequence spans 163 residues: Allophycocyanin alpha-B chain (163 aa).

An N4-methylasparagine modification is found at Asn71. Cys81 serves as a coordination point for (2R,3E)-phycocyanobilin.

Belongs to the phycobiliprotein family. As to quaternary structure, heterodimer of an alpha and a beta chain. Post-translationally, contains one covalently linked bilin chromophore.

Its subcellular location is the cellular thylakoid membrane. Its function is as follows. Light-harvesting photosynthetic bile pigment-protein from the phycobiliprotein complex. Allophycocyanin has a maximum absorption at approximately 650 nanometers. This Synechococcus sp. (strain ATCC 27144 / PCC 6301 / SAUG 1402/1) (Anacystis nidulans) protein is Allophycocyanin alpha-B chain.